The following is a 291-amino-acid chain: ATP synthase gamma chain (291 aa).

The protein belongs to the ATPase gamma chain family. In terms of assembly, F-type ATPases have 2 components, CF(1) - the catalytic core - and CF(0) - the membrane proton channel. CF(1) has five subunits: alpha(3), beta(3), gamma(1), delta(1), epsilon(1). CF(0) has three main subunits: a, b and c.

It localises to the cell membrane. In terms of biological role, produces ATP from ADP in the presence of a proton gradient across the membrane. The gamma chain is believed to be important in regulating ATPase activity and the flow of protons through the CF(0) complex. The polypeptide is ATP synthase gamma chain (Buchnera aphidicola subsp. Baizongia pistaciae (strain Bp)).